Here is a 1213-residue protein sequence, read N- to C-terminus: SWI/SNF complex subunit SMARCC2 (1213 aa).

Residues methionine 1–alanine 274 form a marR-like, BRCT and chromo domains module region. The region spanning proline 10–cysteine 136 is the MarR-like domain. A BRCT; N-terminus domain is found at proline 140–glycine 183. Residues glutamate 189–proline 217 enclose the Chromo domain. Residues lysine 233–tyrosine 257 enclose the BRCT; C-terminus domain. Residues aspartate 256 to histidine 413 form a disordered region. Positions lysine 275–proline 284 are enriched in polar residues. 5 positions are modified to phosphoserine: serine 283, serine 286, serine 302, serine 304, and serine 306. Lysine 312 carries the N6-(ADP-ribosyl)lysine modification. Lysine 326 carries the N6-acetyllysine modification. Over residues histidine 331–aspartate 344 the composition is skewed to basic and acidic residues. Serine 347 and serine 387 each carry phosphoserine. A compositionally biased stretch (acidic residues) spans aspartate 379–asparagine 398. The SWIRM domain maps to isoleucine 424 to threonine 521. Glycyl lysine isopeptide (Lys-Gly) (interchain with G-Cter in SUMO2) cross-links involve residues lysine 564, lysine 566, lysine 568, and lysine 592. In terms of domain architecture, SANT spans serine 596 to proline 647. Lysine 704 participates in a covalent cross-link: Glycyl lysine isopeptide (Lys-Gly) (interchain with G-Cter in SUMO2). A disordered region spans residues lysine 724 to lysine 848. Residues glutamate 747–glutamate 777 are compositionally biased toward basic and acidic residues. A Glycyl lysine isopeptide (Lys-Gly) (interchain with G-Cter in SUMO2) cross-link involves residue lysine 787. A compositionally biased stretch (basic and acidic residues) spans glutamate 788 to lysine 848. Residue serine 813 is modified to Phosphoserine. A Glycyl lysine isopeptide (Lys-Gly) (interchain with G-Cter in SUMO2) cross-link involves residue lysine 848. Residues glutamate 907–phenylalanine 934 adopt a coiled-coil conformation. 2 disordered regions span residues arginine 947 to valine 1073 and leucine 1181 to glutamine 1213. Low complexity predominate over residues glutamine 949–proline 962. Positions proline 963–proline 974 are enriched in pro residues. Residues threonine 975–proline 1033 show a composition bias toward low complexity. Composition is skewed to pro residues over residues glycine 1034–methionine 1060 and serine 1185–proline 1201.

This sequence belongs to the SMARCC family. In terms of assembly, component of the multiprotein chromatin-remodeling complexes SWI/SNF: SWI/SNF-A (BAF), SWI/SNF-B (PBAF) and related complexes. The canonical complex contains a catalytic subunit (either SMARCA4/BRG1/BAF190A or SMARCA2/BRM/BAF190B) and at least SMARCE1, ACTL6A/BAF53, SMARCC1/BAF155, SMARCC2/BAF170, and SMARCB1/SNF5/BAF47. Other subunits specific to each of the complexes may also be present permitting several possible combinations developmentally and tissue specific. Component of the BAF complex, which includes at least actin (ACTB), ARID1A/BAF250A, ARID1B/BAF250B, SMARCA2/BRM, SMARCA4/BRG1, ACTL6A/BAF53, ACTL6B/BAF53B, SMARCE1/BAF57, SMARCC1/BAF155, SMARCC2/BAF170, SMARCB1/SNF5/INI1, and one or more SMARCD1/BAF60A, SMARCD2/BAF60B, or SMARCD3/BAF60C. In muscle cells, the BAF complex also contains DPF3. Component of neural progenitors-specific chromatin remodeling complex (npBAF complex) composed of at least, ARID1A/BAF250A or ARID1B/BAF250B, SMARCD1/BAF60A, SMARCD3/BAF60C, SMARCA2/BRM/BAF190B, SMARCA4/BRG1/BAF190A, SMARCB1/BAF47, SMARCC1/BAF155, SMARCE1/BAF57, SMARCC2/BAF170, PHF10/BAF45A, ACTL6A/BAF53A and actin. Component of neuron-specific chromatin remodeling complex (nBAF complex) composed of at least, ARID1A/BAF250A or ARID1B/BAF250B, SMARCD1/BAF60A, SMARCD3/BAF60C, SMARCA2/BRM/BAF190B, SMARCA4/BRG1/BAF190A, SMARCB1/BAF47, SMARCC1/BAF155, SMARCE1/BAF57, SMARCC2/BAF170, DPF1/BAF45B, DPF3/BAF45C, ACTL6B/BAF53B and actin. Component of the SWI/SNF-B (PBAF) chromatin remodeling complex, at least composed of SMARCA4/BRG1, SMARCB1/BAF47/SNF5, ACTL6A/BAF53A or ACTL6B/BAF53B, SMARCE1/BAF57, SMARCD1/BAF60A, SMARCD2/BAF60B, perhaps SMARCD3/BAF60C, SMARCC1/BAF155, SMARCC2/BAF170, PBRM1/BAF180, ARID2/BAF200 and actin. May also interact with the SIN3A histone deacetylase transcription repressor complex in conjunction with SMARCA2 and SMARCA4. Interacts with SMARD1. Interacts with KDM6B. Interaction with RCOR1. Interacts with DPF2. Interacts with ERCC6. Interacts with FOS. Post-translationally, mono-ADP-ribosylation at Lys-312 by SIRT6 promotes recruitment to the enhancer region of the Heme oxygenase-1 (HO-1) locus, leading to transcription activation of the locus.

Its subcellular location is the nucleus. Involved in transcriptional activation and repression of select genes by chromatin remodeling (alteration of DNA-nucleosome topology). Component of SWI/SNF chromatin remodeling complexes that carry out key enzymatic activities, changing chromatin structure by altering DNA-histone contacts within a nucleosome in an ATP-dependent manner. Can stimulate the ATPase activity of the catalytic subunit of these complexes. May be required for CoREST dependent repression of neuronal specific gene promoters in non-neuronal cells. Belongs to the neural progenitors-specific chromatin remodeling complex (npBAF complex) and the neuron-specific chromatin remodeling complex (nBAF complex). During neural development a switch from a stem/progenitor to a postmitotic chromatin remodeling mechanism occurs as neurons exit the cell cycle and become committed to their adult state. The transition from proliferating neural stem/progenitor cells to postmitotic neurons requires a switch in subunit composition of the npBAF and nBAF complexes. As neural progenitors exit mitosis and differentiate into neurons, npBAF complexes which contain ACTL6A/BAF53A and PHF10/BAF45A, are exchanged for homologous alternative ACTL6B/BAF53B and DPF1/BAF45B or DPF3/BAF45C subunits in neuron-specific complexes (nBAF). The npBAF complex is essential for the self-renewal/proliferative capacity of the multipotent neural stem cells. The nBAF complex along with CREST plays a role regulating the activity of genes essential for dendrite growth. Critical regulator of myeloid differentiation, controlling granulocytopoiesis and the expression of genes involved in neutrophil granule formation. This chain is SWI/SNF complex subunit SMARCC2 (Smarcc2), found in Mus musculus (Mouse).